The chain runs to 505 residues: RNA-splicing ligase RtcB homolog (505 aa).

5 residues coordinate Mn(2+): Asp119, Cys122, His227, His259, and His353. 226-230 contacts GMP; sequence NHYAE. Residues 353–354, 402–405, Ser409, 428–431, and Lys504 each bind GMP; these read HN, GGTM, and HGAG. His428 (GMP-histidine intermediate) is an active-site residue.

The protein belongs to the RtcB family. Catalytic component of the tRNA-splicing ligase complex. Requires Mn(2+) as cofactor.

The enzyme catalyses a 3'-end 3'-phospho-ribonucleotide-RNA + a 5'-end dephospho-ribonucleoside-RNA + GTP = a ribonucleotidyl-ribonucleotide-RNA + GMP + diphosphate. It carries out the reaction a 3'-end 2',3'-cyclophospho-ribonucleotide-RNA + a 5'-end dephospho-ribonucleoside-RNA + GTP + H2O = a ribonucleotidyl-ribonucleotide-RNA + GMP + diphosphate + H(+). Its function is as follows. Catalytic subunit of the tRNA-splicing ligase complex that acts by directly joining spliced tRNA halves to mature-sized tRNAs by incorporating the precursor-derived splice junction phosphate into the mature tRNA as a canonical 3',5'-phosphodiester. May act as an RNA ligase with broad substrate specificity, and may function toward other RNAs. The protein is RNA-splicing ligase RtcB homolog of Nematostella vectensis (Starlet sea anemone).